A 332-amino-acid chain; its full sequence is Probable electron transfer flavoprotein subunit alpha, mitochondrial (332 aa).

FAD is bound at residue 275-303 (LYIAIGISGAIQHLAGMKDSKVIVAINKD).

This sequence belongs to the ETF alpha-subunit/FixB family. In terms of assembly, heterodimer of an alpha and a beta subunit. FAD is required as a cofactor.

It is found in the mitochondrion matrix. In terms of biological role, the electron transfer flavoprotein serves as a specific electron acceptor for several dehydrogenases, including five acyl-CoA dehydrogenases, glutaryl-CoA and sarcosine dehydrogenase. It transfers the electrons to the main mitochondrial respiratory chain via ETF-ubiquinone oxidoreductase (ETF dehydrogenase). The chain is Probable electron transfer flavoprotein subunit alpha, mitochondrial from Caenorhabditis elegans.